Here is a 280-residue protein sequence, read N- to C-terminus: 4-deoxy-L-threo-5-hexosulose-uronate ketol-isomerase (280 aa).

Positions 198, 200, 205, and 247 each coordinate Zn(2+).

The protein belongs to the KduI family. Zn(2+) serves as cofactor.

It carries out the reaction 5-dehydro-4-deoxy-D-glucuronate = 3-deoxy-D-glycero-2,5-hexodiulosonate. The protein operates within glycan metabolism; pectin degradation; 2-dehydro-3-deoxy-D-gluconate from pectin: step 4/5. Catalyzes the isomerization of 5-dehydro-4-deoxy-D-glucuronate to 3-deoxy-D-glycero-2,5-hexodiulosonate. The chain is 4-deoxy-L-threo-5-hexosulose-uronate ketol-isomerase from Bacteroides fragilis (strain YCH46).